We begin with the raw amino-acid sequence, 70 residues long: Conotoxin TsMLKM-011 (70 aa).

Positions 1-24 (MLKMGVVLFVFLVLFPLATLQLDA) are cleaved as a signal peptide. Residues 25–54 (DQPVERYAENKQLVSPYERRQIILHALGQR) constitute a propeptide that is removed on maturation. 3 cysteine pairs are disulfide-bonded: cysteine 56-cysteine 66, cysteine 57-cysteine 68, and cysteine 62-cysteine 69.

Belongs to the conotoxin M superfamily. As to expression, expressed by the venom duct.

It is found in the secreted. The sequence is that of Conotoxin TsMLKM-011 from Conus tessulatus (Tessellate cone).